The chain runs to 445 residues: Beclin-1 (445 aa).

Positions 103-122 (TMENLSRRLKVTGDLFDIMS) match the BH3 motif. Positions 137 to 264 (DTLLDQLDTQ…QLDKLKKTNV (128 aa)) form a coiled coil. The evolutionary conserved domain (ECD) stretch occupies residues 240-445 (DDLKSVENQM…AWVSSQFYNK (206 aa)). The required for membrane-association stretch occupies residues 420 to 445 (WTKALKFMLTNLKWGLAWVSSQFYNK).

It belongs to the beclin family. In terms of assembly, component of the PI3K (PI3KC3/PI3K-III/class III phosphatidylinositol 3-kinase) complex. Post-translationally, may be proteolytically processed by caspases; the C-terminal fragment(s) may induce apoptosis.

It is found in the cytoplasm. The protein resides in the golgi apparatus. The protein localises to the trans-Golgi network membrane. It localises to the endosome membrane. Its subcellular location is the endoplasmic reticulum membrane. It is found in the mitochondrion membrane. The protein resides in the cytoplasmic vesicle. The protein localises to the autophagosome. In terms of biological role, plays a central role in autophagy. Acts as core subunit of different PI3K complex forms that mediate formation of phosphatidylinositol 3-phosphate and are believed to play a role in multiple membrane trafficking pathways: PI3KC3-C1 is involved in initiation of autophagosomes and PI3KC3-C2 in maturation of autophagosomes and endocytosis. Involved in regulation of degradative endocytic trafficking and required for the abscission step in cytokinesis, probably in the context of PI3KC3-C2. Essential for the formation of PI3KC3-C2 but not PI3KC3-C1 PI3K complex forms. Involved in endocytosis including endosome formation in neuronal cells. In Xenopus tropicalis (Western clawed frog), this protein is Beclin-1 (becn1).